A 60-amino-acid polypeptide reads, in one-letter code: Large ribosomal subunit protein uL30 (60 aa).

It belongs to the universal ribosomal protein uL30 family. In terms of assembly, part of the 50S ribosomal subunit.

This is Large ribosomal subunit protein uL30 from Limosilactobacillus reuteri (strain DSM 20016) (Lactobacillus reuteri).